Here is a 176-residue protein sequence, read N- to C-terminus: Large ribosomal subunit protein uL6 (176 aa).

This sequence belongs to the universal ribosomal protein uL6 family. In terms of assembly, part of the 50S ribosomal subunit.

In terms of biological role, this protein binds to the 23S rRNA, and is important in its secondary structure. It is located near the subunit interface in the base of the L7/L12 stalk, and near the tRNA binding site of the peptidyltransferase center. The protein is Large ribosomal subunit protein uL6 of Methanosarcina mazei (strain ATCC BAA-159 / DSM 3647 / Goe1 / Go1 / JCM 11833 / OCM 88) (Methanosarcina frisia).